The following is a 1006-amino-acid chain: Unconventional myosin-Id (1006 aa).

An N-acetylalanine modification is found at Ala2. The Myosin motor domain occupies 9–695 (FGKADFVLMD…TLFTLEELRA (687 aa)). An ATP-binding site is contributed by 102-109 (GESGAGKT). Phosphoserine is present on Ser200. Tyr536 is modified (phosphotyrosine). Residues 572-594 (MIALVDNLASKEPYYVRCIKPND) form an actin-binding region. 2 consecutive IQ domains span residues 699-719 (VRVV…MRYK) and 721-741 (TKAA…SYIH). Residues 776–896 (LQSIFNRWRA…MDPTKQYKVM (121 aa)) are interaction with calmodulin. One can recognise a TH1 domain in the interval 812-1005 (GQRADLGLQR…RSGFILSVPG (194 aa)).

This sequence belongs to the TRAFAC class myosin-kinesin ATPase superfamily. Myosin family. In terms of assembly, interacts (via the two IQ motifs) with calmodulin. Binds an additional calmodulin chain via a third, C-terminal region. Interacts with F-actin. As to expression, detected on tracheal epithelial cells, and on epithelial cells and brush border cells in duodenum, jejunum and ileum. Detected on myelinated white matter in the cerebellum, and the myelinated part of the optic nerve. Detected on mature oligodendrocites. Detected on the outside of the myelin sheet that surrounds axons (at protein level). Ubiquitous. Highest levels in adult brain, and spinal cord. Moderate levels in lung, kidney, liver and spleen. Low levels in testis and heart (at protein level).

The protein resides in the cytoplasm. It localises to the perikaryon. Its subcellular location is the cell projection. It is found in the dendrite. The protein localises to the early endosome. The protein resides in the cell cortex. Unconventional myosin that functions as actin-based motor protein with ATPase activity. Plays a role in endosomal protein trafficking, and especially in the transfer of cargo proteins from early to recycling endosomes. Required for normal planar cell polarity in ciliated tracheal cells, for normal rotational polarity of cilia, and for coordinated, unidirectional ciliary movement in the trachea. Required for normal, polarized cilia organization in brain ependymal epithelial cells. This Rattus norvegicus (Rat) protein is Unconventional myosin-Id (Myo1d).